A 57-amino-acid chain; its full sequence is UPF0337 protein SAV_1088 (57 aa).

Basic and acidic residues-rich tracts occupy residues M1 to K15 and Q36 to H57. Positions M1 to H57 are disordered.

It belongs to the UPF0337 (CsbD) family.

This is UPF0337 protein SAV_1088 from Streptomyces avermitilis (strain ATCC 31267 / DSM 46492 / JCM 5070 / NBRC 14893 / NCIMB 12804 / NRRL 8165 / MA-4680).